Here is a 264-residue protein sequence, read N- to C-terminus: Thymidylate synthase (264 aa).

Arg-21 serves as a coordination point for dUMP. His-51 lines the (6R)-5,10-methylene-5,6,7,8-tetrahydrofolate pocket. Residue 126 to 127 coordinates dUMP; the sequence is RR. Catalysis depends on Cys-146, which acts as the Nucleophile. DUMP is bound by residues 166–169, Asn-177, and 207–209; these read RSAD and HIY. Residue Asp-169 participates in (6R)-5,10-methylene-5,6,7,8-tetrahydrofolate binding. Position 263 (Ser-263) interacts with (6R)-5,10-methylene-5,6,7,8-tetrahydrofolate.

This sequence belongs to the thymidylate synthase family. Bacterial-type ThyA subfamily. As to quaternary structure, homodimer.

Its subcellular location is the cytoplasm. It catalyses the reaction dUMP + (6R)-5,10-methylene-5,6,7,8-tetrahydrofolate = 7,8-dihydrofolate + dTMP. The protein operates within pyrimidine metabolism; dTTP biosynthesis. Its function is as follows. Catalyzes the reductive methylation of 2'-deoxyuridine-5'-monophosphate (dUMP) to 2'-deoxythymidine-5'-monophosphate (dTMP) while utilizing 5,10-methylenetetrahydrofolate (mTHF) as the methyl donor and reductant in the reaction, yielding dihydrofolate (DHF) as a by-product. This enzymatic reaction provides an intracellular de novo source of dTMP, an essential precursor for DNA biosynthesis. This is Thymidylate synthase from Exiguobacterium sp. (strain ATCC BAA-1283 / AT1b).